Reading from the N-terminus, the 214-residue chain is Urease accessory protein UreG (214 aa).

A disordered region spans residues 1-20; the sequence is MSQLHAVPGRTKKLPPLRVG. 23-30 is a binding site for GTP; that stretch reads GPVGSGKT.

The protein belongs to the SIMIBI class G3E GTPase family. UreG subfamily. In terms of assembly, homodimer. UreD, UreF and UreG form a complex that acts as a GTP-hydrolysis-dependent molecular chaperone, activating the urease apoprotein by helping to assemble the nickel containing metallocenter of UreC. The UreE protein probably delivers the nickel.

It is found in the cytoplasm. Facilitates the functional incorporation of the urease nickel metallocenter. This process requires GTP hydrolysis, probably effectuated by UreG. The sequence is that of Urease accessory protein UreG from Leptothrix cholodnii (strain ATCC 51168 / LMG 8142 / SP-6) (Leptothrix discophora (strain SP-6)).